A 423-amino-acid polypeptide reads, in one-letter code: Histidine--tRNA ligase (423 aa).

It belongs to the class-II aminoacyl-tRNA synthetase family. Homodimer.

The protein localises to the cytoplasm. It carries out the reaction tRNA(His) + L-histidine + ATP = L-histidyl-tRNA(His) + AMP + diphosphate + H(+). The chain is Histidine--tRNA ligase from Prochlorococcus marinus (strain MIT 9211).